The sequence spans 98 residues: MTADAPVISGSSVVKLARGVRLHEDPVRGQTVLLAPERAMAVDDIAVAIVQALDGERNLDRIAADFAEKFDAPVEEIAEDVRTFVQELSVRRMLEIVQ.

Belongs to the PqqD family. In terms of assembly, monomer. Interacts with PqqE.

It functions in the pathway cofactor biosynthesis; pyrroloquinoline quinone biosynthesis. Its function is as follows. Functions as a PqqA binding protein and presents PqqA to PqqE, in the pyrroloquinoline quinone (PQQ) biosynthetic pathway. The protein is PqqA binding protein of Rhizobium meliloti (strain 1021) (Ensifer meliloti).